The primary structure comprises 160 residues: Sec-independent protein translocase protein TatB (160 aa).

The helical transmembrane segment at 1-21 (MFGMGFFEILVVLVVAIIFLG) threads the bilayer. The interval 118–160 (HLNEEVSNEEALNKEVSSDESPKEVQLATDNNTKEHDKEKENV) is disordered. Basic and acidic residues-rich tracts occupy residues 128–140 (ALNKEVSSDESPK) and 149–160 (NTKEHDKEKENV).

Belongs to the TatB family. In terms of assembly, the Tat system comprises two distinct complexes: a TatABC complex, containing multiple copies of TatA, TatB and TatC subunits, and a separate TatA complex, containing only TatA subunits. Substrates initially bind to the TatABC complex, which probably triggers association of the separate TatA complex to form the active translocon.

It localises to the cell inner membrane. Functionally, part of the twin-arginine translocation (Tat) system that transports large folded proteins containing a characteristic twin-arginine motif in their signal peptide across membranes. Together with TatC, TatB is part of a receptor directly interacting with Tat signal peptides. TatB may form an oligomeric binding site that transiently accommodates folded Tat precursor proteins before their translocation. The sequence is that of Sec-independent protein translocase protein TatB from Helicobacter pylori (strain ATCC 700392 / 26695) (Campylobacter pylori).